The chain runs to 314 residues: Nerylneryl diphosphate synthase CPT2, chloroplastic (314 aa).

A chloroplast-targeting transit peptide spans 1-61 (MNSSIVSQHF…MSDRGLSKIS (61 aa)). Asp97 is a catalytic residue.

This sequence belongs to the UPP synthase family. Requires Mg(2+) as cofactor. In terms of tissue distribution, expressed in stems. Expressed in petiolules. Expressed at low levels in leaf trichomes, old leaf and roots.

It is found in the plastid. The protein resides in the chloroplast. The catalysed reaction is 3 isopentenyl diphosphate + dimethylallyl diphosphate = nerylneryl diphosphate + 3 diphosphate. The enzyme catalyses isopentenyl diphosphate + dimethylallyl diphosphate = neryl diphosphate + diphosphate. It carries out the reaction neryl diphosphate + isopentenyl diphosphate = (2Z,6Z)-farnesyl diphosphate + diphosphate. It catalyses the reaction (2Z,6Z)-farnesyl diphosphate + isopentenyl diphosphate = nerylneryl diphosphate + diphosphate. Functionally, uses dimethylallyl diphosphate and isopentenyl diphosphate to catalyze the cis-prenyl chain elongation and produce the 20 carbon product nerylneryl diphosphate. This Solanum lycopersicum (Tomato) protein is Nerylneryl diphosphate synthase CPT2, chloroplastic.